The chain runs to 271 residues: Formamidopyrimidine-DNA glycosylase (271 aa).

The active-site Schiff-base intermediate with DNA is P2. The active-site Proton donor is E3. K58 functions as the Proton donor; for beta-elimination activity in the catalytic mechanism. H91, R110, and R152 together coordinate DNA. An FPG-type zinc finger spans residues 237–271 (QIYGRSAHPCPICGTPIRLERIGQRASYYCTQCQH). The active-site Proton donor; for delta-elimination activity is the R261.

This sequence belongs to the FPG family. Monomer. The cofactor is Zn(2+).

The catalysed reaction is Hydrolysis of DNA containing ring-opened 7-methylguanine residues, releasing 2,6-diamino-4-hydroxy-5-(N-methyl)formamidopyrimidine.. It carries out the reaction 2'-deoxyribonucleotide-(2'-deoxyribose 5'-phosphate)-2'-deoxyribonucleotide-DNA = a 3'-end 2'-deoxyribonucleotide-(2,3-dehydro-2,3-deoxyribose 5'-phosphate)-DNA + a 5'-end 5'-phospho-2'-deoxyribonucleoside-DNA + H(+). In terms of biological role, involved in base excision repair of DNA damaged by oxidation or by mutagenic agents. Acts as a DNA glycosylase that recognizes and removes damaged bases. Has a preference for oxidized purines, such as 7,8-dihydro-8-oxoguanine (8-oxoG). Has AP (apurinic/apyrimidinic) lyase activity and introduces nicks in the DNA strand. Cleaves the DNA backbone by beta-delta elimination to generate a single-strand break at the site of the removed base with both 3'- and 5'-phosphates. In Nitrosococcus oceani (strain ATCC 19707 / BCRC 17464 / JCM 30415 / NCIMB 11848 / C-107), this protein is Formamidopyrimidine-DNA glycosylase.